The chain runs to 1358 residues: Regulatory protein SIR4 (1358 aa).

Residues 1–15 (MPNDNKTPNRSSTPK) show a composition bias toward polar residues. Disordered regions lie at residues 1–98 (MPND…PHSN), 252–277 (SLSV…SPGI), 356–466 (HDEK…PPEI), 498–544 (VQGE…ISNG), 677–726 (ASTE…EDEQ), 752–787 (VSDS…DLDT), and 913–970 (HSQE…ENLS). Residues 26-39 (KIPEREEKSNEVKT) are compositionally biased toward basic and acidic residues. Polar residues-rich tracts occupy residues 49 to 66 (KSKN…SPHQ) and 75 to 96 (HKQL…SFPH). The segment covering 373–388 (QKMKEDADLKRMEILK) has biased composition (basic and acidic residues). Polar residues predominate over residues 428 to 437 (QENNYNSTSR). Residues 452–464 (KNGENKKIGKRPP) show a composition bias toward basic and acidic residues. Positions 507-517 (RNNTLNVTPSK) are enriched in polar residues. Residue Ser692 is modified to Phosphoserine. A compositionally biased stretch (polar residues) spans 706 to 720 (FPVSLSQPSKKSFAN). Positions 754–766 (DSDDSSSDNDSLT) are enriched in acidic residues. Over residues 777-787 (NEIKVTNDLDT) the composition is skewed to basic and acidic residues. Residues 916–932 (EQNSSSAKPSQIPTVSS) show a composition bias toward polar residues. Lys1128 participates in a covalent cross-link: Glycyl lysine isopeptide (Lys-Gly) (interchain with G-Cter in SUMO). The stretch at 1271-1347 (LSFVDIVLSK…DAKINKLMEK (77 aa)) forms a coiled coil.

As to quaternary structure, homodimer. Interacts with MPS3. Interacts with RIS1. Interacts with SIR1, SIR2 and SIR3. Interacts with YKU80. Interacts with UBP10. Interacts with RAP1 (via C-terminus).

The protein resides in the nucleus. Functionally, the proteins SIR1 through SIR4 are required for transcriptional repression of the silent mating type loci, HML and HMR. The proteins SIR2 through SIR4 repress mulitple loci by modulating chromatin structure. Involves the compaction of chromatin fiber into a more condensed form. The polypeptide is Regulatory protein SIR4 (SIR4) (Saccharomyces cerevisiae (strain ATCC 204508 / S288c) (Baker's yeast)).